The chain runs to 315 residues: Aspartate carbamoyltransferase catalytic subunit (315 aa).

The carbamoyl phosphate site is built by Arg65 and Thr66. Lys93 contributes to the L-aspartate binding site. Arg115, His145, and Gln148 together coordinate carbamoyl phosphate. L-aspartate-binding residues include Arg179 and Arg234. Carbamoyl phosphate is bound by residues Gly275 and Pro276.

Belongs to the aspartate/ornithine carbamoyltransferase superfamily. ATCase family. Heterododecamer (2C3:3R2) of six catalytic PyrB chains organized as two trimers (C3), and six regulatory PyrI chains organized as three dimers (R2).

It carries out the reaction carbamoyl phosphate + L-aspartate = N-carbamoyl-L-aspartate + phosphate + H(+). It participates in pyrimidine metabolism; UMP biosynthesis via de novo pathway; (S)-dihydroorotate from bicarbonate: step 2/3. In terms of biological role, catalyzes the condensation of carbamoyl phosphate and aspartate to form carbamoyl aspartate and inorganic phosphate, the committed step in the de novo pyrimidine nucleotide biosynthesis pathway. This chain is Aspartate carbamoyltransferase catalytic subunit, found in Xanthomonas axonopodis pv. citri (strain 306).